A 614-amino-acid polypeptide reads, in one-letter code: Probable glycerol-3-phosphate dehydrogenase (614 aa).

57–85 (DLVVVGGGSTGAGCALDGATRGLKVALVD) is an FAD binding site. Positions 595–614 (MECPEEKRHRGERRLPPQEK) are disordered. Basic and acidic residues predominate over residues 598 to 614 (PEEKRHRGERRLPPQEK).

Belongs to the FAD-dependent glycerol-3-phosphate dehydrogenase family. Requires FAD as cofactor.

The protein resides in the cytoplasm. It catalyses the reaction a quinone + sn-glycerol 3-phosphate = dihydroxyacetone phosphate + a quinol. It functions in the pathway polyol metabolism; glycerol degradation via glycerol kinase pathway; glycerone phosphate from sn-glycerol 3-phosphate (anaerobic route): step 1/1. In Encephalitozoon cuniculi (strain GB-M1) (Microsporidian parasite), this protein is Probable glycerol-3-phosphate dehydrogenase.